The chain runs to 486 residues: Glutamyl-tRNA(Gln) amidotransferase subunit A (486 aa).

Catalysis depends on charge relay system residues K74 and S149. S173 serves as the catalytic Acyl-ester intermediate.

The protein belongs to the amidase family. GatA subfamily. As to quaternary structure, heterotrimer of A, B and C subunits.

It carries out the reaction L-glutamyl-tRNA(Gln) + L-glutamine + ATP + H2O = L-glutaminyl-tRNA(Gln) + L-glutamate + ADP + phosphate + H(+). Allows the formation of correctly charged Gln-tRNA(Gln) through the transamidation of misacylated Glu-tRNA(Gln) in organisms which lack glutaminyl-tRNA synthetase. The reaction takes place in the presence of glutamine and ATP through an activated gamma-phospho-Glu-tRNA(Gln). The protein is Glutamyl-tRNA(Gln) amidotransferase subunit A of Prochlorococcus marinus (strain MIT 9313).